A 298-amino-acid chain; its full sequence is MTEEFEIAGISTGAWWSSPTNTAAVFSGYSLPCSTEISPDVTNFGWQNFDNKINDHNDGCMNMHNSFFEGLLIDPNDQLLPDPWSKSTIPNAKSELLENFPFLDNMFLVDSEAESLLDHEIRNHKSSKEQITQDYKNLTSKRSEELEENSDEYSPRLLKRPRLETLSPLPSFKVRKEKLGDRITALQQLVSPFGKTDTASVLNEAVEYIKFLQEQVTVLSNPEQNTIGSVQQQQCSNKKSINTQGEVEEDECSPRRYVDLSSRGLCLMPISASYPVAAAAASAAEMNVHLVSGIFHSL.

The stretch at 117 to 149 forms a coiled coil; it reads LDHEIRNHKSSKEQITQDYKNLTSKRSEELEEN. Residues 126–154 are disordered; the sequence is SSKEQITQDYKNLTSKRSEELEENSDEYS. Residues 129-140 are compositionally biased toward polar residues; that stretch reads EQITQDYKNLTS. One can recognise a bHLH domain in the interval 163–212; the sequence is LETLSPLPSFKVRKEKLGDRITALQQLVSPFGKTDTASVLNEAVEYIKFL.

As to quaternary structure, homodimer. Differentiating root endodermis.

Its subcellular location is the nucleus. This is Transcription factor bHLH114 (BHLH114) from Arabidopsis thaliana (Mouse-ear cress).